We begin with the raw amino-acid sequence, 433 residues long: Signal recognition particle 54 kDa protein (433 aa).

GTP contacts are provided by residues 106–113 (GVEGSGKT), 186–190 (DTAGR), and 244–247 (TKMD).

Belongs to the GTP-binding SRP family. SRP54 subfamily. In terms of assembly, part of the signal recognition particle protein translocation system, which is composed of SRP and FtsY. Archaeal SRP consists of a 7S RNA molecule of 300 nucleotides and two protein subunits: SRP54 and SRP19.

It localises to the cytoplasm. The enzyme catalyses GTP + H2O = GDP + phosphate + H(+). Its function is as follows. Involved in targeting and insertion of nascent membrane proteins into the cytoplasmic membrane. Binds to the hydrophobic signal sequence of the ribosome-nascent chain (RNC) as it emerges from the ribosomes. The SRP-RNC complex is then targeted to the cytoplasmic membrane where it interacts with the SRP receptor FtsY. This chain is Signal recognition particle 54 kDa protein, found in Pyrobaculum neutrophilum (strain DSM 2338 / JCM 9278 / NBRC 100436 / V24Sta) (Thermoproteus neutrophilus).